Here is a 75-residue protein sequence, read N- to C-terminus: uncharacterized protein (75 aa).

The span at 19-38 (FHNTAPSKTNVNVPRANKSQ) shows a compositional bias: polar residues. Residues 19–42 (FHNTAPSKTNVNVPRANKSQSKGK) are disordered. The chain crosses the membrane as a helical span at residues 47–66 (LLVLVGTLALVTSVISVNYQ).

The protein resides in the membrane. This is an uncharacterized protein from Saccharomyces cerevisiae (strain ATCC 204508 / S288c) (Baker's yeast).